Reading from the N-terminus, the 239-residue chain is MSKQVAHSFSSEDFSFIKQKLAREAVALVEPGMRVGLGSGSTAREFILALGERVRNERLAITAVASSRISHLLAQALGIPFLDPALSQELDLVVDGADEVDANLRMIKGGGGALFREKILLQSGKRNIILVDERKLVSVLGTFPLPIEISPFGCSSVEKVLNQQGYIGDWRKTSHGERFITDNGNYIYDVSSPDSYPHPEEDLIRLLQIRGIIDVGFVIAKAEVWVGYADGTVVRKEIT.

Substrate is bound by residues 39–42 (SGST), 95–98 (DGAD), and 108–111 (KGGG). Glutamate 117 (proton acceptor) is an active-site residue. Substrate is bound at residue lysine 135.

Belongs to the ribose 5-phosphate isomerase family. As to quaternary structure, homodimer.

It carries out the reaction aldehydo-D-ribose 5-phosphate = D-ribulose 5-phosphate. It participates in carbohydrate degradation; pentose phosphate pathway; D-ribose 5-phosphate from D-ribulose 5-phosphate (non-oxidative stage): step 1/1. Its function is as follows. Catalyzes the reversible conversion of ribose-5-phosphate to ribulose 5-phosphate. The protein is Ribose-5-phosphate isomerase A of Chlamydia muridarum (strain MoPn / Nigg).